We begin with the raw amino-acid sequence, 317 residues long: mRNA 3'-end-processing protein yth-1 (317 aa).

The tract at residues 1–20 (MATTTQTTTNSLPSGAGGPQ) is disordered. 5 consecutive C3H1-type zinc fingers follow at residues 51 to 78 (PADRPICKAYASGNCPLKSHCPERHVTA), 93 to 120 (GFGSLVCKHWLRGLCKKGESCEFLHEYN), 121 to 149 (LRKMPECNFFVRNGYCSNGDECLYLHIDP), 150 to 177 (LSRLPPCPHYERGFCPLGPRCDKKHFRR), and 179 to 202 (LCLYYLAGFCPDGKGCKEGAHPRW). Basic and acidic residues predominate over residues 202-217 (WTADKDMEKPRAKGEG). Residues 202–317 (WTADKDMEKP…GRGGFRGKGH (116 aa)) are disordered. The segment covering 223 to 237 (QQQQQQQQQQHMGDA) has biased composition (low complexity). The span at 253-288 (YMDRERERDRDNREREMMMQGRDRDGGGHDRHKDRF) shows a compositional bias: basic and acidic residues. Residues 289-301 (GGGGGGGGGGRGR) show a composition bias toward gly residues. Over residues 302–317 (GGWRGRGRGGFRGKGH) the composition is skewed to basic residues.

It belongs to the CPSF4/YTH1 family.

Its subcellular location is the nucleus. Functionally, component of the cleavage factor I (CF I) involved in pre-mRNA 3'-end processing. This is mRNA 3'-end-processing protein yth-1 (yth-1) from Neurospora crassa (strain ATCC 24698 / 74-OR23-1A / CBS 708.71 / DSM 1257 / FGSC 987).